The sequence spans 129 residues: uncharacterized protein (129 aa).

The tract at residues 44 to 63 (PYRAADRSNDQDNDRSGGNV) is disordered. A compositionally biased stretch (basic and acidic residues) spans 46 to 58 (RAADRSNDQDNDR). The next 2 membrane-spanning stretches (helical) occupy residues 78 to 98 (IISLFVLPVLLGAAGIIVGYI) and 109 to 129 (AWAMGIGVVSLVLGIFIIPFF).

Its subcellular location is the cell membrane. This is an uncharacterized protein from Bacillus subtilis (strain 168).